Reading from the N-terminus, the 431-residue chain is MLTPVFWITQDDDALLIRIRAPHGNIAELDYDHGDYMFVFTCPPYFLRLHFKQMVEEYGSGNGSVEWKSDEGEFHIKVPKMHKKEHFSNLDMITELLTPSTTHHQPHGNQLVEEMDDSEDDDEGDGSEFLVEQQPAAEPEEPKSDGKIEKFGYGFGWSKFGVIERLRDEIGKIVDILEPENVEIEKRADKLMEFDWENFDEGRYLADTLEPEEELLAVISSKFAQKLEISDEDRTKLKDLKKSKTSAKINGNDVEIMTSLIDIVFGYCYDQRVNDWESACESGWNCAKLSPSLSFFAKFSSVKECLLACTRRALTYPLYRSFQLTQRVIQDVCHVITAGGGRPALLHILCDLHRIFIESGEFRYILNDLMIADYIFWIQTVPDEILTRIQTDLTEISGKIDKYDIGWDLEVLEAEAKLANTQLDSDDEPDN.

Belongs to the SHQ1 family.

Functionally, required for the quantitative accumulation of H/ACA ribonucleoproteins (RNPs). This Caenorhabditis elegans protein is Protein SHQ1 homolog.